The chain runs to 432 residues: MVNVVLGSQWGDEGKGKLVDILVSHYDVVARCAGGNNAGHTIVVDGVKYDFHMLPSGLVNPNCKNLLGNGVVIHIPSFFKELETLESKGLNDARGRLFISSRAHLVFDFHQRTDKLRELELAGRSKDGKNIGTTGKGIGPTYSTKASRSGLRVHHLVNDNPGAWELFESRYRRLLETRKQRYGDFDYDAEEELNRFKQYKESLKPFVVDSVDFLHKSIANNEKILVEGANALMLDIDFGTYPYVTSSNTGIGGVITGLGIPPQKIQEVYGVVKAYTTRVGEGPFPTEQLNEQGEKLQSIGAEFGVTTGRKRRCGWLDLVLLKYSTLINGYTSLNITKLDVLDTFTEIPVGVSYKYKGETLNSFPEDLLTLGNVEVEYVTLPGWNQDITQIKKYDDLPENAKKYLKFIEDFVKVPVQWVGTGPARDSMLEKQI.

GTP is bound by residues 11 to 17 and 39 to 41; these read GDEGKGK and GHT. Asp-12 (proton acceptor) is an active-site residue. Asp-12 and Gly-39 together coordinate Mg(2+). Residues 12-15, 37-40, Thr-134, Arg-148, Asn-230, Thr-245, and Arg-309 contribute to the IMP site; these read DEGK and NAGH. Catalysis depends on His-40, which acts as the Proton donor. 305–311 is a binding site for substrate; it reads VTTGRKR. Residues Arg-311, 337–339, and 419–421 each bind GTP; these read KLD and GTG.

Belongs to the adenylosuccinate synthetase family. As to quaternary structure, homodimer. Mg(2+) is required as a cofactor.

It localises to the cytoplasm. It carries out the reaction IMP + L-aspartate + GTP = N(6)-(1,2-dicarboxyethyl)-AMP + GDP + phosphate + 2 H(+). The protein operates within purine metabolism; AMP biosynthesis via de novo pathway; AMP from IMP: step 1/2. Plays an important role in the de novo pathway and in the salvage pathway of purine nucleotide biosynthesis. Catalyzes the first committed step in the biosynthesis of AMP from IMP. This Candida glabrata (strain ATCC 2001 / BCRC 20586 / JCM 3761 / NBRC 0622 / NRRL Y-65 / CBS 138) (Yeast) protein is Adenylosuccinate synthetase.